The sequence spans 81 residues: RNA-binding protein Hfq (81 aa).

The Sm domain maps to 10 to 69 (DPFLNTLRKEHVPVSIYLVNGIKLQGQVDSFDQYVILLKNTVTQMVYKHAISTIVPGRAV).

The protein belongs to the Hfq family. As to quaternary structure, homohexamer.

RNA chaperone that binds small regulatory RNA (sRNAs) and mRNAs to facilitate mRNA translational regulation in response to envelope stress, environmental stress and changes in metabolite concentrations. Also binds with high specificity to tRNAs. In Methylobacillus flagellatus (strain ATCC 51484 / DSM 6875 / VKM B-1610 / KT), this protein is RNA-binding protein Hfq.